The primary structure comprises 510 residues: Protein disulfide-isomerase (510 aa).

A signal peptide spans 1 to 20 (MLRRALLCLALTALFRAGAG). The Thioredoxin 1 domain occupies 27-136 (HVLVLHKGNF…IVNWLKKRTG (110 aa)). Catalysis depends on nucleophile residues Cys-55 and Cys-58. Cys-55 and Cys-58 are joined by a disulfide. Residue Lys-202 is modified to N6-acetyllysine. 2 positions are modified to N6-succinyllysine: Lys-224 and Lys-273. Phosphoserine occurs at positions 333 and 359. The Thioredoxin 2 domain maps to 351 to 477 (GKIKPHLMSQ…FKKFLESGGQ (127 aa)). Residues Cys-399 and Cys-402 each act as nucleophile in the active site. Cysteines 399 and 402 form a disulfide. Phosphoserine is present on Ser-429. Positions 473–510 (ESGGQDGAGDDDDLEDLEEAEEPDLEEDDDQKAVKDEL) are disordered. Over residues 480–502 (AGDDDDLEDLEEAEEPDLEEDDD) the composition is skewed to acidic residues. The Prevents secretion from ER signature appears at 507-510 (KDEL).

It belongs to the protein disulfide isomerase family. As to quaternary structure, heterodimer; heterodimerizes with the protein microsomal triglyceride transfer MTTP. Homodimer. Monomers and homotetramers may also occur. Interacts with P4HA2, forming a heterotetramer consisting of 2 alpha subunits (P4HA2) and 2 beta (P4HB), where P4HB plays the role of a structural subunit; this tetramer catalyzes the formation of 4-hydroxyproline in collagen. Also constitutes the structural subunit of the microsomal triacylglycerol transfer protein MTTP in mammalian cells. Stabilizes both enzymes and retain them in the ER without contributing to the catalytic activity. Binds UBQLN1. Interacts with ERO1B. Interacts with ILDR2. Interacts with ERN1/IRE1A (via N-terminus); the interaction is enhanced by phosphorylation of P4HB by FAM20C in response to endoplasmic reticulum stress and results in attenuation of ERN1 activity. In terms of processing, phosphorylation of Ser-359 by FAM20C is induced by endoplasmic reticulum stress and results in a functional switch from oxidoreductase to molecular chaperone. It also promotes interaction with ERN1.

The protein resides in the endoplasmic reticulum. The protein localises to the endoplasmic reticulum lumen. It is found in the melanosome. Its subcellular location is the cell membrane. It carries out the reaction Catalyzes the rearrangement of -S-S- bonds in proteins.. Functionally, this multifunctional protein catalyzes the formation, breakage and rearrangement of disulfide bonds. At the cell surface, seems to act as a reductase that cleaves disulfide bonds of proteins attached to the cell. May therefore cause structural modifications of exofacial proteins. Inside the cell, seems to form/rearrange disulfide bonds of nascent proteins. At high concentrations and following phosphorylation by FAM20C, functions as a chaperone that inhibits aggregation of misfolded proteins. At low concentrations, facilitates aggregation (anti-chaperone activity). May be involved with other chaperones in the structural modification of the TG precursor in hormone biogenesis. Also acts as a structural subunit of various enzymes such as prolyl 4-hydroxylase and microsomal triacylglycerol transfer protein MTTP. Receptor for LGALS9; the interaction retains P4HB at the cell surface of Th2 T helper cells, increasing disulfide reductase activity at the plasma membrane, altering the plasma membrane redox state and enhancing cell migration. The sequence is that of Protein disulfide-isomerase (P4HB) from Bos taurus (Bovine).